We begin with the raw amino-acid sequence, 551 residues long: Cytochrome c oxidase subunit 1 (551 aa).

A helical transmembrane segment spans residues threonine 34–isoleucine 54. Residue glycine 62 participates in Ca(2+) binding. Histidine 79 provides a ligand contact to Fe(II)-heme a. Helical transmembrane passes span leucine 81–isoleucine 101, alanine 126–isoleucine 146, valine 163–alanine 183, threonine 209–phenylalanine 229, leucine 252–methionine 272, and valine 285–valine 305. A Cu cation-binding site is contributed by histidine 258. Positions histidine 258–tyrosine 262 form a cross-link, 1'-histidyl-3'-tyrosine (His-Tyr). Tyrosine 262 serves as a coordination point for O2. Cu cation contacts are provided by histidine 308 and histidine 309. A run of 2 helical transmembrane segments spans residues alanine 326–alanine 346 and alanine 356–leucine 376. Residues histidine 386 and aspartate 387 each contribute to the Mg(2+) site. Helical transmembrane passes span valine 391–leucine 411, phenylalanine 432–serine 452, and glycine 475–valine 495. Histidine 394 is a heme a3 binding site. Histidine 396 is a Fe(II)-heme a binding site.

It belongs to the heme-copper respiratory oxidase family. As to quaternary structure, component of the cytochrome c oxidase (complex IV, CIV), a multisubunit enzyme composed of a catalytic core of 3 subunits and several supernumerary subunits. The complex exists as a monomer or a dimer and forms supercomplexes (SCs) in the inner mitochondrial membrane with ubiquinol-cytochrome c oxidoreductase (cytochrome b-c1 complex, complex III, CIII). Requires heme as cofactor. Cu cation is required as a cofactor.

It is found in the mitochondrion inner membrane. The enzyme catalyses 4 Fe(II)-[cytochrome c] + O2 + 8 H(+)(in) = 4 Fe(III)-[cytochrome c] + 2 H2O + 4 H(+)(out). The protein operates within energy metabolism; oxidative phosphorylation. Its function is as follows. Component of the cytochrome c oxidase, the last enzyme in the mitochondrial electron transport chain which drives oxidative phosphorylation. The respiratory chain contains 3 multisubunit complexes succinate dehydrogenase (complex II, CII), ubiquinol-cytochrome c oxidoreductase (cytochrome b-c1 complex, complex III, CIII) and cytochrome c oxidase (complex IV, CIV), that cooperate to transfer electrons derived from NADH and succinate to molecular oxygen, creating an electrochemical gradient over the inner membrane that drives transmembrane transport and the ATP synthase. Cytochrome c oxidase is the component of the respiratory chain that catalyzes the reduction of oxygen to water. Electrons originating from reduced cytochrome c in the intermembrane space (IMS) are transferred via the dinuclear copper A center (CU(A)) of subunit 2 and heme A of subunit 1 to the active site in subunit 1, a binuclear center (BNC) formed by heme A3 and copper B (CU(B)). The BNC reduces molecular oxygen to 2 water molecules using 4 electrons from cytochrome c in the IMS and 4 protons from the mitochondrial matrix. The sequence is that of Cytochrome c oxidase subunit 1 (COI) from Mytilus edulis (Blue mussel).